The following is a 461-amino-acid chain: Protein YIG1 (461 aa).

The segment at 58 to 80 (SNVGEDGGDVGNYSEEDDDGDEE) is disordered. Positions 71–80 (SEEDDDGDEE) are enriched in acidic residues.

The protein resides in the cytoplasm. It localises to the nucleus. Functionally, involved in the regulation of anaerobiotic glycerol metabolism. The polypeptide is Protein YIG1 (YIG1) (Saccharomyces cerevisiae (strain ATCC 204508 / S288c) (Baker's yeast)).